Consider the following 1325-residue polypeptide: uncharacterized protein (1325 aa).

The first 27 residues, 1–27 (MHTFTRKVKWPFMFTAIGLTFGIVAVA), serve as a signal peptide directing secretion. A lipid anchor (N-palmitoyl cysteine) is attached at Cys28. Cys28 carries the S-diacylglycerol cysteine lipid modification. Disordered regions lie at residues 379 to 402 (RAASSSSEGTIQLKTASDGGGTTQ) and 430 to 464 (NTNANQTGGGGSGGGGGTSTGSSTGSSTETTTGNS). Gly residues predominate over residues 436–448 (TGGGGSGGGGGTS). Over residues 449–464 (TGSSTGSSTETTTGNS) the composition is skewed to low complexity.

Belongs to the MG307/MG309/MG338 family.

Its subcellular location is the cell membrane. This is an uncharacterized protein from Mycoplasma pneumoniae (strain ATCC 29342 / M129 / Subtype 1) (Mycoplasmoides pneumoniae).